We begin with the raw amino-acid sequence, 491 residues long: Tryptophan 5-hydroxylase 2 (491 aa).

Serine 19 is modified (phosphoserine). A disordered region spans residues 33-63 (NLTVNKSNSGKNDDKKGNKGSSRSETAPDSG). Residues 66–141 (AVVFSLRNEV…TIVTLNPPEN (76 aa)) enclose the ACT domain. The Fe cation site is built by histidine 319, histidine 324, and glutamate 364.

It belongs to the biopterin-dependent aromatic amino acid hydroxylase family. Interacts with DNAJC12. The cofactor is Fe(2+).

It catalyses the reaction (6R)-L-erythro-5,6,7,8-tetrahydrobiopterin + L-tryptophan + O2 = 5-hydroxy-L-tryptophan + (4aS,6R)-4a-hydroxy-L-erythro-5,6,7,8-tetrahydrobiopterin. The protein operates within aromatic compound metabolism; serotonin biosynthesis; serotonin from L-tryptophan: step 1/2. This Equus caballus (Horse) protein is Tryptophan 5-hydroxylase 2 (TPH2).